Here is a 135-residue protein sequence, read N- to C-terminus: Lactoylglutathione lyase (135 aa).

The 125-residue stretch at glutamine 2–asparagine 126 folds into the VOC domain. Residue histidine 5 coordinates Ni(2+). Arginine 9 is a substrate binding site. Glutamate 56 contacts Ni(2+). 2 residues coordinate substrate: asparagine 60 and histidine 74. Ni(2+)-binding residues include histidine 74 and glutamate 122. Residue glutamate 122 is the Proton donor/acceptor of the active site.

The protein belongs to the glyoxalase I family. Homodimer. Ni(2+) serves as cofactor.

It carries out the reaction (R)-S-lactoylglutathione = methylglyoxal + glutathione. Its pathway is secondary metabolite metabolism; methylglyoxal degradation; (R)-lactate from methylglyoxal: step 1/2. In terms of biological role, catalyzes the conversion of hemimercaptal, formed from methylglyoxal and glutathione, to S-lactoylglutathione. This Haemophilus influenzae (strain ATCC 51907 / DSM 11121 / KW20 / Rd) protein is Lactoylglutathione lyase (gloA).